A 1042-amino-acid chain; its full sequence is Isoleucine--tRNA ligase (1042 aa).

The 'HIGH' region signature appears at 48–58 (PFATGLPHFGH). The 'KMSKS' region signature appears at 594-598 (KMSKS). Residue Lys-597 coordinates ATP.

The protein belongs to the class-I aminoacyl-tRNA synthetase family. IleS type 2 subfamily. As to quaternary structure, monomer. It depends on Zn(2+) as a cofactor.

It is found in the cytoplasm. It carries out the reaction tRNA(Ile) + L-isoleucine + ATP = L-isoleucyl-tRNA(Ile) + AMP + diphosphate. Functionally, catalyzes the attachment of isoleucine to tRNA(Ile). As IleRS can inadvertently accommodate and process structurally similar amino acids such as valine, to avoid such errors it has two additional distinct tRNA(Ile)-dependent editing activities. One activity is designated as 'pretransfer' editing and involves the hydrolysis of activated Val-AMP. The other activity is designated 'posttransfer' editing and involves deacylation of mischarged Val-tRNA(Ile). This chain is Isoleucine--tRNA ligase, found in Borreliella burgdorferi (strain ZS7) (Borrelia burgdorferi).